The following is a 208-amino-acid chain: dITP/XTP pyrophosphatase (208 aa).

Ser15–Lys20 serves as a coordination point for substrate. Mg(2+) is bound by residues Glu47 and Asp76. The active-site Proton acceptor is the Asp76. Residues Ser77, His157 to Asp160, Lys180, and His185 to Arg186 each bind substrate.

Belongs to the HAM1 NTPase family. As to quaternary structure, homodimer. Mg(2+) serves as cofactor.

It catalyses the reaction XTP + H2O = XMP + diphosphate + H(+). The enzyme catalyses dITP + H2O = dIMP + diphosphate + H(+). The catalysed reaction is ITP + H2O = IMP + diphosphate + H(+). Its function is as follows. Pyrophosphatase that catalyzes the hydrolysis of nucleoside triphosphates to their monophosphate derivatives, with a high preference for the non-canonical purine nucleotides XTP (xanthosine triphosphate), dITP (deoxyinosine triphosphate) and ITP. Seems to function as a house-cleaning enzyme that removes non-canonical purine nucleotides from the nucleotide pool, thus preventing their incorporation into DNA/RNA and avoiding chromosomal lesions. The protein is dITP/XTP pyrophosphatase of Gluconobacter oxydans (strain 621H) (Gluconobacter suboxydans).